Here is a 134-residue protein sequence, read N- to C-terminus: MAKAPANNAAQRVRKKVRKNVADGIAHVHASFNNTIITITDRQGNALSWASSGGQGFKGSRKSTPFAAQVASEVAGRAAVEQGIKNLDVEIKGPGPGRESSVRALAALGIRINSIADVTPVPHNGCRPQKRRRI.

It belongs to the universal ribosomal protein uS11 family. As to quaternary structure, part of the 30S ribosomal subunit. Interacts with proteins S7 and S18. Binds to IF-3.

Its function is as follows. Located on the platform of the 30S subunit, it bridges several disparate RNA helices of the 16S rRNA. Forms part of the Shine-Dalgarno cleft in the 70S ribosome. In Variovorax paradoxus (strain S110), this protein is Small ribosomal subunit protein uS11.